Reading from the N-terminus, the 405-residue chain is Glyceraldehyde-3-phosphate dehydrogenase A, chloroplastic (405 aa).

The N-terminal 68 residues, 1 to 68 (MASATFSVAK…GHKKSLVVEA (68 aa)), are a transit peptide targeting the chloroplast. NADP(+) contacts are provided by residues 80–81 (RI), D104, and R149. D-glyceraldehyde 3-phosphate is bound by residues 221–223 (SCT), T252, R267, 280–281 (TG), and R303. C222 functions as the Nucleophile in the catalytic mechanism. N385 serves as a coordination point for NADP(+).

The protein belongs to the glyceraldehyde-3-phosphate dehydrogenase family. In terms of assembly, tetramer of either four A chains (GAPDH 2) or two A and two B chains (GAPDH 1).

It is found in the plastid. The protein localises to the chloroplast. The enzyme catalyses D-glyceraldehyde 3-phosphate + phosphate + NADP(+) = (2R)-3-phospho-glyceroyl phosphate + NADPH + H(+). It functions in the pathway carbohydrate biosynthesis; Calvin cycle. This is Glyceraldehyde-3-phosphate dehydrogenase A, chloroplastic (GAPA) from Pisum sativum (Garden pea).